The following is a 153-amino-acid chain: Arginine repressor (153 aa).

The protein belongs to the ArgR family.

It localises to the cytoplasm. The protein operates within amino-acid biosynthesis; L-arginine biosynthesis [regulation]. Functionally, regulates arginine biosynthesis genes. This chain is Arginine repressor, found in Actinobacillus pleuropneumoniae serotype 5b (strain L20).